Here is a 544-residue protein sequence, read N- to C-terminus: CTP synthase (544 aa).

Residues 1 to 267 are amidoligase domain; the sequence is MAKFVFITGG…AQRVLQILNL (267 aa). Ser13 provides a ligand contact to CTP. Ser13 contacts UTP. 14 to 19 provides a ligand contact to ATP; the sequence is SIGKGI. Tyr54 lines the L-glutamine pocket. Asp71 serves as a coordination point for ATP. The Mg(2+) site is built by Asp71 and Glu141. CTP is bound by residues 148–150, 188–193, and Lys224; these read DIE and KTKPTQ. UTP is bound by residues 188-193 and Lys224; that span reads KTKPTQ. One can recognise a Glutamine amidotransferase type-1 domain in the interval 292–534; it reads EIAIVGKYVR…IEAALRSRSR (243 aa). Gly354 provides a ligand contact to L-glutamine. Residue Cys381 is the Nucleophile; for glutamine hydrolysis of the active site. Residues 382–385, Glu405, and Arg462 each bind L-glutamine; that span reads LGMQ. Residues His507 and Glu509 contribute to the active site.

This sequence belongs to the CTP synthase family. As to quaternary structure, homotetramer.

The enzyme catalyses UTP + L-glutamine + ATP + H2O = CTP + L-glutamate + ADP + phosphate + 2 H(+). It carries out the reaction L-glutamine + H2O = L-glutamate + NH4(+). The catalysed reaction is UTP + NH4(+) + ATP = CTP + ADP + phosphate + 2 H(+). The protein operates within pyrimidine metabolism; CTP biosynthesis via de novo pathway; CTP from UDP: step 2/2. Allosterically activated by GTP, when glutamine is the substrate; GTP has no effect on the reaction when ammonia is the substrate. The allosteric effector GTP functions by stabilizing the protein conformation that binds the tetrahedral intermediate(s) formed during glutamine hydrolysis. Inhibited by the product CTP, via allosteric rather than competitive inhibition. In terms of biological role, catalyzes the ATP-dependent amination of UTP to CTP with either L-glutamine or ammonia as the source of nitrogen. Regulates intracellular CTP levels through interactions with the four ribonucleotide triphosphates. The chain is CTP synthase from Synechococcus sp. (strain JA-3-3Ab) (Cyanobacteria bacterium Yellowstone A-Prime).